A 373-amino-acid chain; its full sequence is Leucine aminopeptidase 1 (373 aa).

The signal sequence occupies residues 1-18 (MKLLSVLALSATATSVLG). Asn-136 carries N-linked (GlcNAc...) asparagine glycosylation. Residues His-176 and Asp-195 each contribute to the Zn(2+) site. N-linked (GlcNAc...) asparagine glycosylation is present at Asn-196. Residues Glu-234 and Asp-261 each contribute to the Zn(2+) site. N-linked (GlcNAc...) asparagine glycosylation is present at Asn-284. The cysteines at positions 310 and 314 are disulfide-linked. Position 343 (His-343) interacts with Zn(2+).

It belongs to the peptidase M28 family. M28E subfamily. As to quaternary structure, monomer. Zn(2+) is required as a cofactor.

It is found in the secreted. Functionally, extracellular aminopeptidase which contributes to pathogenicity. This chain is Leucine aminopeptidase 1 (LAP1), found in Trichophyton equinum (Horse ringworm fungus).